Consider the following 113-residue polypeptide: Stigma/stylar cysteine-rich adhesin (113 aa).

Positions M1 to A22 are cleaved as a signal peptide. 4 cysteine pairs are disulfide-bonded: C25-C72, C35-C49, C50-C95, and C70-C109.

The protein belongs to the plant LTP family. Highly expressed in style and stigma, abundant in young leaves and petals, and low expression in young anthers at pollen mother cell stage with an active tapetum. Not expressed in mature leaves or in pollen grains or tubes. Found in the stylar transmitting tract epidermis and in the stylar extracellular matrix.

Acts as an adhesive agent between the pollen tube wall and the stylar transmitting tract epidermis. Binds a stylar pectin in a pH-dependent manner. Enhances activity of chemocyanin, a diffusible chemotropic factor. This Lilium longiflorum (Trumpet lily) protein is Stigma/stylar cysteine-rich adhesin (SCA).